The chain runs to 662 residues: 72 kDa type IV collagenase (662 aa).

The first 29 residues, 1 to 29 (MEARLVWGVLVGPLRVLCVLCCLLGHAIA), serve as a signal peptide directing secretion. Positions 30–109 (APSPIIKFPG…PRCGNPDVAN (80 aa)) are cleaved as a propeptide — activation peptide. The short motif at 100-107 (PRCGNPDV) is the Cysteine switch element. Residue Cys-102 coordinates Zn(2+). The collagenase-like 1 stretch occupies residues 110-221 (YNFFPRKPKW…LWTLGEGQVV (112 aa)). Asp-134 and Asp-168 together coordinate Ca(2+). Zn(2+)-binding residues include His-178 and Asp-180. Ca(2+) is bound by residues Asp-185 and Gly-186. Position 193 (His-193) interacts with Zn(2+). Residues Gly-200, Gly-202, and Asp-204 each contribute to the Ca(2+) site. A Zn(2+)-binding site is contributed by His-206. Ca(2+)-binding residues include Asp-208, Asp-209, and Glu-211. The tract at residues 222–396 (RVKYGNADGE…WGFCPDQGYS (175 aa)) is collagen-binding. 3 Fibronectin type-II domains span residues 228–276 (ADGE…FCPH), 286–334 (GDGQ…FCPE), and 344–392 (SEGA…FCPD). Disulfide bonds link Cys-233–Cys-259, Cys-247–Cys-274, Cys-291–Cys-317, Cys-305–Cys-332, Cys-349–Cys-375, and Cys-363–Cys-390. The collagenase-like 2 stretch occupies residues 397–467 (LFLVAAHEFG…GPTPTLGPVT (71 aa)). His-403 is a Zn(2+) binding site. Glu-404 is an active-site residue. Residues His-407 and His-413 each coordinate Zn(2+). A required for inhibitor TIMP2 binding region spans residues 414 to 662 (SQDPGALMAP…GSIKSDWLGC (249 aa)). A disulfide bridge links Cys-471 with Cys-662. Hemopexin repeat units follow at residues 474–518 (DIVF…WPEL), 519–565 (PEKI…GLPP), 567–615 (VQQV…WNAI), and 616–662 (PDNL…WLGC). 3 residues coordinate Ca(2+): Asp-478, Asp-523, and Asp-571. Asn-575 carries an N-linked (GlcNAc...) asparagine glycan. Ca(2+) is bound at residue Asp-620. Residue Asn-644 is glycosylated (N-linked (GlcNAc...) asparagine).

The protein belongs to the peptidase M10A family. As to quaternary structure, interacts (via the C-terminal hemopexin-like domains-containing region) with the integrin alpha-V/beta-3; the interaction promotes vascular invasion in angiogenic vessels and melamoma cells. Interacts (via the C-terminal PEX domain) with TIMP2 (via the C-terminal); the interaction inhibits the degradation activity. Interacts with GSK3B. The cofactor is Ca(2+). Zn(2+) is required as a cofactor. In terms of processing, phosphorylation on multiple sites modulates enzymatic activity. Phosphorylated by PKC in vitro. Post-translationally, the propeptide is processed by MMP14 (MT-MMP1) and MMP16 (MT-MMP3). Autocatalytic cleavage in the C-terminal produces the anti-angiogenic peptide, PEX. This processing appears to be facilitated by binding integrin integrinv/beta3.

It is found in the secreted. The protein localises to the extracellular space. It localises to the extracellular matrix. Its subcellular location is the membrane. The protein resides in the nucleus. The catalysed reaction is Cleavage of gelatin type I and collagen types IV, V, VII, X. Cleaves the collagen-like sequence Pro-Gln-Gly-|-Ile-Ala-Gly-Gln.. Its function is as follows. Ubiquitinous metalloproteinase that is involved in diverse functions such as remodeling of the vasculature, angiogenesis, tissue repair, tumor invasion, inflammation, and atherosclerotic plaque rupture. As well as degrading extracellular matrix proteins, can also act on several nonmatrix proteins such as big endothelial 1 and beta-type CGRP promoting vasoconstriction. Also cleaves KISS at a Gly-|-Leu bond. Appears to have a role in myocardial cell death pathways. Contributes to myocardial oxidative stress by regulating the activity of GSK3beta. Cleaves GSK3beta in vitro. Involved in the formation of the fibrovascular tissues. PEX, the C-terminal non-catalytic fragment of MMP2, possesses anti-angiogenic and anti-tumor properties and inhibits cell migration and cell adhesion to FGF2 and vitronectin. Ligand for integrin alpha-v/beta3 on the surface of blood vessels. The polypeptide is 72 kDa type IV collagenase (Mmp2) (Rattus norvegicus (Rat)).